The primary structure comprises 130 residues: Small ribosomal subunit protein uS9 (130 aa).

This sequence belongs to the universal ribosomal protein uS9 family.

The sequence is that of Small ribosomal subunit protein uS9 from Salmonella paratyphi A (strain AKU_12601).